Here is a 1062-residue protein sequence, read N- to C-terminus: Carbamoyl phosphate synthase large chain (1062 aa).

Residues 1-401 (MPKRKDIHKI…AMQKAVRSLE (401 aa)) are carboxyphosphate synthetic domain. Residues Arg-129, Arg-169, Gly-175, Gly-176, Lys-208, Ile-210, Glu-215, Gly-241, Ile-242, His-243, Gln-284, and Glu-298 each coordinate ATP. In terms of domain architecture, ATP-grasp 1 spans 133–327 (KNLCKELGEP…IAKMAAKIAV (195 aa)). Residues Gln-284, Glu-298, and Asn-300 each contribute to the Mg(2+) site. 3 residues coordinate Mn(2+): Gln-284, Glu-298, and Asn-300. An oligomerization domain region spans residues 402–546 (IDEKDLYSEE…YSTYDAENES (145 aa)). A carbamoyl phosphate synthetic domain region spans residues 547–929 (HRSGKKSVIV…ALYKAFAGAK (383 aa)). Residues 671-861 (DDIIKELKLN…MAQVATRVIM (191 aa)) form the ATP-grasp 2 domain. ATP contacts are provided by Arg-707, Asp-746, Leu-748, Glu-752, Gly-777, Val-778, His-779, Ser-780, Gln-820, and Glu-832. Positions 820, 832, and 834 each coordinate Mg(2+). Residues Gln-820, Glu-832, and Asn-834 each contribute to the Mn(2+) site. The MGS-like domain occupies 930–1062 (MQLPENGNVL…NRSFATDALQ (133 aa)). The segment at 930–1062 (MQLPENGNVL…NRSFATDALQ (133 aa)) is allosteric domain.

This sequence belongs to the CarB family. In terms of assembly, composed of two chains; the small (or glutamine) chain promotes the hydrolysis of glutamine to ammonia, which is used by the large (or ammonia) chain to synthesize carbamoyl phosphate. Tetramer of heterodimers (alpha,beta)4. It depends on Mg(2+) as a cofactor. Mn(2+) is required as a cofactor.

The catalysed reaction is hydrogencarbonate + L-glutamine + 2 ATP + H2O = carbamoyl phosphate + L-glutamate + 2 ADP + phosphate + 2 H(+). It catalyses the reaction hydrogencarbonate + NH4(+) + 2 ATP = carbamoyl phosphate + 2 ADP + phosphate + 2 H(+). Its pathway is amino-acid biosynthesis; L-arginine biosynthesis; carbamoyl phosphate from bicarbonate: step 1/1. The protein operates within pyrimidine metabolism; UMP biosynthesis via de novo pathway; (S)-dihydroorotate from bicarbonate: step 1/3. Its function is as follows. Large subunit of the glutamine-dependent carbamoyl phosphate synthetase (CPSase). CPSase catalyzes the formation of carbamoyl phosphate from the ammonia moiety of glutamine, carbonate, and phosphate donated by ATP, constituting the first step of 2 biosynthetic pathways, one leading to arginine and/or urea and the other to pyrimidine nucleotides. The large subunit (synthetase) binds the substrates ammonia (free or transferred from glutamine from the small subunit), hydrogencarbonate and ATP and carries out an ATP-coupled ligase reaction, activating hydrogencarbonate by forming carboxy phosphate which reacts with ammonia to form carbamoyl phosphate. The polypeptide is Carbamoyl phosphate synthase large chain (Lactobacillus acidophilus (strain ATCC 700396 / NCK56 / N2 / NCFM)).